Consider the following 251-residue polypeptide: Probable caffeoyl-CoA O-methyltransferase 3 (251 aa).

S-adenosyl-L-methionine is bound by residues T61, D83, 85–86 (GV), S91, D109, and A138. Position 160 (D160) interacts with a divalent metal cation. Residue D162 participates in S-adenosyl-L-methionine binding. Residues D186 and N187 each coordinate a divalent metal cation.

Belongs to the class I-like SAM-binding methyltransferase superfamily. Cation-dependent O-methyltransferase family. CCoAMT subfamily.

The catalysed reaction is (E)-caffeoyl-CoA + S-adenosyl-L-methionine = (E)-feruloyl-CoA + S-adenosyl-L-homocysteine + H(+). The protein is Probable caffeoyl-CoA O-methyltransferase 3 (omt1) of Dictyostelium discoideum (Social amoeba).